The primary structure comprises 426 residues: Probable imidazolonepropionase (426 aa).

Positions 159 and 192 each coordinate 4-imidazolone-5-propanoate. Position 159 (Tyr-159) interacts with N-formimidoyl-L-glutamate. Position 260 (His-260) interacts with Fe(3+). His-260 contributes to the Zn(2+) binding site. Glu-263 lines the 4-imidazolone-5-propanoate pocket. Position 334 (Asp-334) interacts with Fe(3+). Asp-334 serves as a coordination point for Zn(2+). Asn-336 is a binding site for N-formimidoyl-L-glutamate.

It belongs to the metallo-dependent hydrolases superfamily. HutI family. The cofactor is Zn(2+). It depends on Fe(3+) as a cofactor.

It catalyses the reaction 4-imidazolone-5-propanoate + H2O = N-formimidoyl-L-glutamate. The protein operates within amino-acid degradation; L-histidine degradation into L-glutamate; N-formimidoyl-L-glutamate from L-histidine: step 3/3. This is Probable imidazolonepropionase (Amdhd1) from Mus musculus (Mouse).